The chain runs to 118 residues: MSSAGNKGSDAEQCAAAFLQQQKLTLLEKNYRCRFGEIDLIMREDDTVVFVEVRMRSSDRFGGAAASITAAKQSRLIRTARHYLAGHEGDFPCRFDAVLISGNRENEIEWIRNAFDES.

The protein belongs to the UPF0102 family.

The polypeptide is UPF0102 protein NE0719 (Nitrosomonas europaea (strain ATCC 19718 / CIP 103999 / KCTC 2705 / NBRC 14298)).